A 489-amino-acid polypeptide reads, in one-letter code: Homoserine O-acetyltransferase (489 aa).

Residues 63–435 enclose the AB hydrolase-1 domain; that stretch reads NALVICHALS…SPEGHDAFLL (373 aa). S162 is a catalytic residue. S162 functions as the Nucleophile in the catalytic mechanism. The segment at 247–272 is disordered; that stretch reads RFGRNVPDPSKRQNINGTERLPTPPN. Catalysis depends on residues D401 and H430.

Belongs to the AB hydrolase superfamily. MetX family.

It catalyses the reaction L-homoserine + acetyl-CoA = O-acetyl-L-homoserine + CoA. It participates in amino-acid biosynthesis; L-methionine biosynthesis via de novo pathway; O-acetyl-L-homoserine from L-homoserine: step 1/1. Functionally, commits homoserine to the methionine biosynthesis pathway by catalyzing its O-acetylation. The protein is Homoserine O-acetyltransferase (metE) of Emericella nidulans (strain FGSC A4 / ATCC 38163 / CBS 112.46 / NRRL 194 / M139) (Aspergillus nidulans).